Consider the following 283-residue polypeptide: MKKIAIFAKVHDPRCQGVAGELITWLEQRRIVPLVEAHFARHLGRSGVTSEEIPDLADMAVVLGGDGTLISAARLLGGREIPILGVNLGSLGFLTEVTLDELYPALEACLGGDYRVSERMMLAATVERGDDIVFSHRVLNDAVINKGALARIVDMESLVNGHYLTTYKADGLIISTPTGSTGYCLSANGPIVHPDLECLTITPICPHTLTNRPIVLEASAEVTIRLISKNEDVYLTLDGQVGMELKCGDIIRVRRAEHRTRLVMSRSKDYFEVLRTKLKWGER.

Aspartate 66 acts as the Proton acceptor in catalysis. Residues 66 to 67, 140 to 141, arginine 151, lysine 168, aspartate 170, 181 to 186, and glutamine 240 each bind NAD(+); these read DG, ND, and TGYCLS.

The protein belongs to the NAD kinase family. The cofactor is a divalent metal cation.

Its subcellular location is the cytoplasm. It carries out the reaction NAD(+) + ATP = ADP + NADP(+) + H(+). In terms of biological role, involved in the regulation of the intracellular balance of NAD and NADP, and is a key enzyme in the biosynthesis of NADP. Catalyzes specifically the phosphorylation on 2'-hydroxyl of the adenosine moiety of NAD to yield NADP. This is NAD kinase from Geobacter metallireducens (strain ATCC 53774 / DSM 7210 / GS-15).